Here is a 362-residue protein sequence, read N- to C-terminus: Class I histocompatibility antigen, Gogo-OKO alpha chain (362 aa).

The first 24 residues, Met-1–Ala-24, serve as a signal peptide directing secretion. Positions Gly-25–Gly-114 are alpha-1. At Gly-25–Ile-308 the chain is on the extracellular side. A glycan (N-linked (GlcNAc...) asparagine) is linked at Asn-110. The segment at Gly-115–Thr-206 is alpha-2. Disulfide bonds link Cys-125–Cys-188 and Cys-227–Cys-283. The alpha-3 stretch occupies residues Asp-207–Trp-298. In terms of domain architecture, Ig-like C1-type spans Pro-209–Thr-295. Residues Glu-299–Ile-308 are connecting peptide. The helical transmembrane segment at Val-309–Trp-332 threads the bilayer. Residues Arg-333–Ala-362 are Cytoplasmic-facing. The disordered stretch occupies residues Ser-337 to Ala-362. Over residues Gly-342–Ala-362 the composition is skewed to low complexity.

Belongs to the MHC class I family. In terms of assembly, heterodimer of an alpha chain and a beta chain (beta-2-microglobulin).

The protein resides in the membrane. Involved in the presentation of foreign antigens to the immune system. The sequence is that of Class I histocompatibility antigen, Gogo-OKO alpha chain from Gorilla gorilla gorilla (Western lowland gorilla).